Consider the following 164-residue polypeptide: MTNEGIGINRDTSTICLREYVFIHFFPVKLISALTNKTNTMVKLTSIAAGVAAIAAGVAAAPATTTLSPSDERVNLVELGVYVSDIRAHLAQYYLFQAAHPTETYPVEIAEAVFNYGDFTTMLTGIPAEQVTRVITGVPWYSTRLRPAISSALSKDGIYTAIPK.

Belongs to the SRP1/TIP1 family. Seripauperin subfamily.

This chain is Seripauperin-21 (PAU21), found in Saccharomyces cerevisiae (strain ATCC 204508 / S288c) (Baker's yeast).